Consider the following 106-residue polypeptide: Iron-sulfur cluster assembly protein CyaY (106 aa).

Belongs to the frataxin family.

Functionally, involved in iron-sulfur (Fe-S) cluster assembly. May act as a regulator of Fe-S biogenesis. The sequence is that of Iron-sulfur cluster assembly protein CyaY from Salmonella agona (strain SL483).